The primary structure comprises 243 residues: Chromosome partition protein MukE (243 aa).

A disordered region spans residues 223–243 (LMENDTKSADEIDEEFDGEQE). Residues 233–243 (EIDEEFDGEQE) are compositionally biased toward acidic residues.

It belongs to the MukE family. In terms of assembly, interacts, and probably forms a ternary complex, with MukF and MukB. The complex formation is stimulated by calcium or magnesium.

It localises to the cytoplasm. It is found in the nucleoid. Its function is as follows. Involved in chromosome condensation, segregation and cell cycle progression. May participate in facilitating chromosome segregation by condensation DNA from both sides of a centrally located replisome during cell division. Probably acts via its interaction with MukB and MukF. The protein is Chromosome partition protein MukE of Haemophilus influenzae (strain ATCC 51907 / DSM 11121 / KW20 / Rd).